The primary structure comprises 432 residues: Anaerobic glycerol-3-phosphate dehydrogenase subunit B (432 aa).

It belongs to the anaerobic G-3-P dehydrogenase subunit B family. As to quaternary structure, composed of a catalytic GlpA/B dimer and of membrane bound GlpC. The cofactor is FMN.

It catalyses the reaction a quinone + sn-glycerol 3-phosphate = dihydroxyacetone phosphate + a quinol. It functions in the pathway polyol metabolism; glycerol degradation via glycerol kinase pathway; glycerone phosphate from sn-glycerol 3-phosphate (anaerobic route): step 1/1. Functionally, conversion of glycerol 3-phosphate to dihydroxyacetone. Uses fumarate or nitrate as electron acceptor. This is Anaerobic glycerol-3-phosphate dehydrogenase subunit B from Haemophilus influenzae (strain PittGG).